Here is a 214-residue protein sequence, read N- to C-terminus: N-(5'-phosphoribosyl)anthranilate isomerase (214 aa).

Belongs to the TrpF family.

It carries out the reaction N-(5-phospho-beta-D-ribosyl)anthranilate = 1-(2-carboxyphenylamino)-1-deoxy-D-ribulose 5-phosphate. It functions in the pathway amino-acid biosynthesis; L-tryptophan biosynthesis; L-tryptophan from chorismate: step 3/5. This Haloarcula marismortui (strain ATCC 43049 / DSM 3752 / JCM 8966 / VKM B-1809) (Halobacterium marismortui) protein is N-(5'-phosphoribosyl)anthranilate isomerase.